The sequence spans 530 residues: 5-aminolevulinate synthase, mitochondrial (530 aa).

Residues 1–26 constitute a mitochondrion transit peptide; it reads MFRPVLKVRPSFSYPYSIVSSRSVRL. 3 residues coordinate substrate: arginine 73, serine 186, and lysine 205. Positions 238, 266, and 316 each coordinate pyridoxal 5'-phosphate. Lysine 319 is a catalytic residue. Residue lysine 319 is modified to N6-(pyridoxal phosphate)lysine. Threonine 348 and threonine 349 together coordinate pyridoxal 5'-phosphate. Threonine 434 lines the substrate pocket.

Belongs to the class-II pyridoxal-phosphate-dependent aminotransferase family. As to quaternary structure, homodimer. Requires pyridoxal 5'-phosphate as cofactor.

The protein resides in the mitochondrion matrix. It catalyses the reaction succinyl-CoA + glycine + H(+) = 5-aminolevulinate + CO2 + CoA. Its pathway is porphyrin-containing compound metabolism; protoporphyrin-IX biosynthesis; 5-aminolevulinate from glycine: step 1/1. Its function is as follows. Catalyzes the synthesis of 5-aminolevulinate (ALA) from succinyl-CoA and glycine, the first and rate-limiting step in heme biosynthesis. The polypeptide is 5-aminolevulinate synthase, mitochondrial (HEM1) (Candida glabrata (strain ATCC 2001 / BCRC 20586 / JCM 3761 / NBRC 0622 / NRRL Y-65 / CBS 138) (Yeast)).